The chain runs to 52 residues: UPF0181 protein HD_1137 (52 aa).

The protein belongs to the UPF0181 family.

The chain is UPF0181 protein HD_1137 from Haemophilus ducreyi (strain 35000HP / ATCC 700724).